A 357-amino-acid polypeptide reads, in one-letter code: MASVLNVKESKAPERTVVVAGLPVDLFSDQLLAVLVKSHFQDIKNEGGDVEDVIYPTRTKGVAYVIFKEKKVAENVIRQKKHWLARKTRHAELTVSLRVSHFGDKIFSSVNAILDLSVFGKEVTLETLVKDLKKKIPSLSFSPLKPNGRISVEGSFLAVKRLRESLLARACSLLEKDRNFTSEERKWNRQNPQRNLQRSNNSLASVRTLVPETARSGEMLVLDTDVFLYLKHKCGSYESTLKKFHILSQEKVDGEITTICLKSIQVGSQPNNAKHVKELIEEWSHALYLKLRKETFILEGKENREKRMIKRACEQLSSRYLEVLINLYRTHIDIIGSSSDTYLFKKGVMKLIGQKVS.

Residues 15 to 104 (RTVVVAGLPV…VSLRVSHFGD (90 aa)) form the RRM domain.

The protein is RNA-binding protein 43 (RBM43) of Homo sapiens (Human).